Consider the following 823-residue polypeptide: DNA ligase (823 aa).

Residues 32 to 36, 81 to 82, and glutamate 121 contribute to the NAD(+) site; these read DAEYD and SL. Residue lysine 123 is the N6-AMP-lysine intermediate of the active site. Residues arginine 144, glutamate 181, lysine 299, and lysine 323 each contribute to the NAD(+) site. Residues cysteine 449, cysteine 452, cysteine 467, and cysteine 473 each coordinate Zn(2+). Residues 528 to 558 are disordered; that stretch reads ETADKGSSENENGDAETVSGDLSKYNTQNGK. The BRCT domain occupies 746-823; the sequence is GINKAVAGKT…SEAELLTLLC (78 aa).

The protein belongs to the NAD-dependent DNA ligase family. LigA subfamily. Requires Mg(2+) as cofactor. Mn(2+) is required as a cofactor.

The enzyme catalyses NAD(+) + (deoxyribonucleotide)n-3'-hydroxyl + 5'-phospho-(deoxyribonucleotide)m = (deoxyribonucleotide)n+m + AMP + beta-nicotinamide D-nucleotide.. Functionally, DNA ligase that catalyzes the formation of phosphodiester linkages between 5'-phosphoryl and 3'-hydroxyl groups in double-stranded DNA using NAD as a coenzyme and as the energy source for the reaction. It is essential for DNA replication and repair of damaged DNA. The sequence is that of DNA ligase from Neisseria gonorrhoeae (strain NCCP11945).